A 731-amino-acid chain; its full sequence is E3 ubiquitin-protein ligase COP1 (731 aa).

The segment at 1–40 (MSGSRQAGSGSAGTSPGSSAASSVTSASSSLSSSPSPPSV) is disordered. The short motif at 109-113 (GSRKR) is the Nuclear localization signal 1 element. An RING-type zinc finger spans residues 136-174 (CPICFDMIEEAYMTKCGHSFCYKCIHQSLEDNNRCPKCN). The short motif at 195–206 (KQKQRFEEKRFK) is the Nuclear localization signal 2 element. A coiled-coil region spans residues 233–301 (LDLANVNLML…DIKRVEEMSG (69 aa)). Positions 235-245 (LANVNLMLELL) match the Nuclear export signal motif. Residues 305–325 (PVSEDSTVPQFEAPSPSHSSI) form a disordered region. 7 WD repeats span residues 419-458 (NGSS…QDAV), 468-508 (TCNS…RSKV), 511-551 (EHEK…SVAS), 553-593 (EAKA…QPIM), 597-635 (GHRK…CLRS), 638-677 (GHIN…TLLT), and 691-729 (RKED…KVLE). Positions 643-645 (KNF) are interaction with TRIB1.

This sequence belongs to the COP1 family. As to quaternary structure, homodimer. Homodimerization is mediated by the coiled coil domain. Component of the DCX DET1-COP1 ubiquitin ligase complex at least composed of RBX1, DET1, DDB1, CUL4A and COP1. Isoform 2 does not interact with CUL4A but still binds to RBX1, suggesting that the interaction may be mediated by another cullin protein. Isoform 1 and isoform 2 interact with CUL5 but not with CUL1, CUL2 not CUL3. Interacts with bZIP transcription factors JUN, JUNB and JUND but not with FOS, ATF2 nor XBP1. Interacts with p53 (TP53). Interacts with COPS6; this interaction stabilizes RFWD2 through reducing its auto-ubiquitination and decelerating its turnover rate. Interacts with SFN; this interaction leads to SFN degradation. Isoform 4 forms heterodimers with isoform 1, preventing its association with DET1. Interacts with p53/TP53 and MTA1. Interacts with TRIB1 (via C-terminus) and TRIB2. In terms of processing, autoubiquitinated. MTA1 destabilizes it by promoting its autoubiquitination. In terms of tissue distribution, ubiquitously expressed at low level. Expressed at higher level in testis, placenta, skeletal muscle and heart.

Its subcellular location is the nucleus speckle. The protein localises to the cytoplasm. The enzyme catalyses S-ubiquitinyl-[E2 ubiquitin-conjugating enzyme]-L-cysteine + [acceptor protein]-L-lysine = [E2 ubiquitin-conjugating enzyme]-L-cysteine + N(6)-ubiquitinyl-[acceptor protein]-L-lysine.. Its pathway is protein modification; protein ubiquitination. TRIB1 competes with substrates for RFWD2 binding. Its function is as follows. E3 ubiquitin-protein ligase that mediates ubiquitination and subsequent proteasomal degradation of target proteins. E3 ubiquitin ligases accept ubiquitin from an E2 ubiquitin-conjugating enzyme in the form of a thioester and then directly transfers the ubiquitin to targeted substrates. Involved in JUN ubiquitination and degradation. Directly involved in p53 (TP53) ubiquitination and degradation, thereby abolishing p53-dependent transcription and apoptosis. Ubiquitinates p53 independently of MDM2 or RCHY1. Probably mediates E3 ubiquitin ligase activity by functioning as the essential RING domain subunit of larger E3 complexes. In contrast, it does not constitute the catalytic RING subunit in the DCX DET1-COP1 complex that negatively regulates JUN, the ubiquitin ligase activity being mediated by RBX1. Involved in 14-3-3 protein sigma/SFN ubiquitination and proteasomal degradation, leading to AKT activation and promotion of cell survival. Ubiquitinates MTA1 leading to its proteasomal degradation. Upon binding to TRIB1, ubiquitinates CEBPA, which lacks a canonical COP1-binding motif. This chain is E3 ubiquitin-protein ligase COP1, found in Homo sapiens (Human).